Consider the following 313-residue polypeptide: Porphobilinogen deaminase (313 aa).

Cys-242 carries the post-translational modification S-(dipyrrolylmethanemethyl)cysteine.

It belongs to the HMBS family. In terms of assembly, monomer. Dipyrromethane is required as a cofactor.

It catalyses the reaction 4 porphobilinogen + H2O = hydroxymethylbilane + 4 NH4(+). It participates in porphyrin-containing compound metabolism; protoporphyrin-IX biosynthesis; coproporphyrinogen-III from 5-aminolevulinate: step 2/4. In terms of biological role, tetrapolymerization of the monopyrrole PBG into the hydroxymethylbilane pre-uroporphyrinogen in several discrete steps. In Pseudomonas paraeruginosa (strain DSM 24068 / PA7) (Pseudomonas aeruginosa (strain PA7)), this protein is Porphobilinogen deaminase.